The chain runs to 201 residues: Small ribosomal subunit protein uS4c (201 aa).

Residues 15-43 (LGALPGLTSKRPRSGSDLRNQSRSGKRSQ) form a disordered region. An S4 RNA-binding domain is found at 89–150 (MRLDNILFRL…KERSRALIQN (62 aa)).

It belongs to the universal ribosomal protein uS4 family. Part of the 30S ribosomal subunit. Contacts protein S5. The interaction surface between S4 and S5 is involved in control of translational fidelity.

It localises to the plastid. The protein resides in the chloroplast. In terms of biological role, one of the primary rRNA binding proteins, it binds directly to 16S rRNA where it nucleates assembly of the body of the 30S subunit. Functionally, with S5 and S12 plays an important role in translational accuracy. In Amborella trichopoda, this protein is Small ribosomal subunit protein uS4c (rps4).